The sequence spans 119 residues: Large ribosomal subunit protein bL17 (119 aa).

It belongs to the bacterial ribosomal protein bL17 family. In terms of assembly, part of the 50S ribosomal subunit. Contacts protein L32.

This is Large ribosomal subunit protein bL17 from Psychrobacter sp. (strain PRwf-1).